The following is a 365-amino-acid chain: Potassium channel subfamily K member 9 (365 aa).

Residues 1-8 (MKKQNVRT) are Cytoplasmic-facing. Residues 9 to 29 (LSLIACTFTYLLVGAAVFDAL) form a helical membrane-spanning segment. Over 30 to 88 (ESDHEMREEEKLKAEEIRIRGKYNISTEDYRQLELVILQSEPHRAGVQWKFAGSFYFAI) the chain is Extracellular. Residue asparagine 53 is glycosylated (N-linked (GlcNAc...) asparagine). An intramembrane region (pore-forming) is located at residues 89 to 101 (TVITTIGYGHAAP). K(+) contacts are provided by threonine 93, isoleucine 94, glycine 95, and tyrosine 96. Residues 93–98 (TIGYGH) form a selectivity filter 1 region. Residues 102–107 (GTDAGK) lie on the Extracellular side of the membrane. The helical transmembrane segment at 108-128 (AFCMFYAVLGIPLTLVMFQSL) threads the bilayer. Residues 129 to 158 (GERMNTFVRYLLKRIKKCCGMRNTEVSMEN) are Cytoplasmic-facing. The chain crosses the membrane as a helical span at residues 159 to 179 (MVTVGFFSCMGTLCIGAAAFS). Over 180-194 (QCEEWSFFHAYYYCF) the chain is Extracellular. An intramembrane region (pore-forming) is located at residues 195 to 207 (ITLTTIGFGDYVA). K(+)-binding residues include threonine 199, isoleucine 200, glycine 201, and phenylalanine 202. The segment at 199–204 (TIGFGD) is selectivity filter 2. Residues 208 to 218 (LQSKGALQRKP) lie on the Extracellular side of the membrane. The helical transmembrane segment at 219–239 (FYVAFSFMYILVGLTVIGAFL) threads the bilayer. At 240–365 (NLVVLRFLTM…HRLMLRRKSV (126 aa)) the chain is on the cytoplasmic side. Positions 243–248 (VLRFLT) are X-gate.

It belongs to the two pore domain potassium channel (TC 1.A.1.8) family. In terms of assembly, homodimer. Heterodimer with KCNK1. Heterodimer with KCNK3. In terms of tissue distribution, highly expressed in the brain.

The protein resides in the cell membrane. The protein localises to the mitochondrion inner membrane. It is found in the cell projection. Its subcellular location is the dendrite. It catalyses the reaction K(+)(in) = K(+)(out). It carries out the reaction Na(+)(in) = Na(+)(out). Inhibited by extracellular acidification. Its function is as follows. K(+) channel that conducts voltage-dependent outward rectifying currents upon membrane depolarization. Voltage sensing is coupled to K(+) electrochemical gradient in an 'ion flux gating' mode where outward but not inward ion flow opens the gate. Changes ion selectivity and becomes permeable to Na(+) ions in response to extracellular acidification. Protonation of the pH sensor His-98 stabilizes C-type inactivation conformation likely converting the channel from outward K(+)-conducting, to inward Na(+)-conducting to nonconductive state. Homo- and heterodimerizes to form functional channels with distinct regulatory and gating properties. Allows K(+) currents with fast-gating kinetics important for the repolarization and hyperpolarization phases of action potentials. In granule neurons, hyperpolarizes the resting membrane potential to limit intrinsic neuronal excitability, but once the action potential threshold is reached, supports high-frequency action potential firing and increased neuronal excitability. Homomeric and/or heteromeric KCNK3:KCNK9 channels operate in cerebellar granule cells, whereas heteromeric KCNK1:KCNK9 enables currents in hippocampal dentate gyrus granule neurons. Dispensable for central chemosensory respiration i.e. breathing controlled by brainstem CO2/pH, it rather conducts pH-sensitive currents and controls the firing rate of serotonergic raphe neurons involved in potentiation of the respiratory chemoreflex. In retinal ganglion cells, mediates outward rectifying currents that regulate action potentials in response to acidification of the synaptic cleft. Involved in transmission of image-forming and nonimage-forming visual information in the retina. In adrenal gland, contributes to the maintenance of a hyperpolarized resting membrane potential of aldosterone-producing cells at zona glomerulosa and limits aldosterone release as part of a regulatory mechanism that controls arterial blood pressure and electrolyte homeostasis. In Cavia porcellus (Guinea pig), this protein is Potassium channel subfamily K member 9 (KCNK9).